Reading from the N-terminus, the 300-residue chain is MSSSTVMADGFEEIEVDVVSVWKEGYAYENRGNSSVQQKITMTKGMKNLNSETKTLTATHTLGRTLKVGDPFEIASVEVSYTFSHQKSQVSMTQTEVYSSQVIEHTVTIPPNKKFTRWKLNADVGGTGIEYMYLIDEVTAIGADLTIPEVNKSRAKILVGRQIHLGETEIRIKHAERKEYMTVISRKSWPAATLGNSNLFKFVLFEDSSGIRIKTLNTMYPGYEWAYSSDQGGIYFDESSDNPKQRWALSKAMPLRHGDVVTFRNNFFTNSGMCYDDGPATNVYCLEKREDKWILEVVNT.

Residues 12-35 form an N-terminal cap domain region; that stretch reads EEIEVDVVSVWKEGYAYENRGNSS. Residues 36 to 109 are beta-hairpin domain; the sequence is VQQKITMTKG…SQVIEHTVTI (74 aa). The interval 110–158 is N-terminal cap domain; it reads PPNKKFTRWKLNADVGGTGIEYMYLIDEVTAIGADLTIPEVNKSRAKIL. Residues 159 to 299 form a C-terminal receptor-binding domain region; the sequence is VGRQIHLGET…EDKWILEVVN (141 aa). K187, S229, Y235, and Y284 together coordinate an N-(acyl)-sphingosylphosphocholine. A disulfide bridge connects residues C274 and C285.

The protein belongs to the lysenin family. Binds to sphingomyelin as a monomer by using its C-terminal domain. Forms a nonamer when sphingomyelin/LRP-1 ratio is lower than ca 500. Oligomerization, but not binding, is influenced by the fluidity of sphingomyelin. As to expression, expressed by coelomocytes.

It is found in the secreted. It localises to the target cell membrane. Its function is as follows. Pore-forming toxin that specifically binds sphingomyelin in the plasma membrane of various cells. Has hemolytic activity. Binding and hemolytic activities of this toxin are 10 times less than those of lysenin and lysenin-related protein 2. This Eisenia fetida (Red wiggler worm) protein is Lysenin-related protein 1.